A 184-amino-acid chain; its full sequence is Probable cobalt-precorrin-6B C(15)-methyltransferase (decarboxylating) (184 aa).

S-adenosyl-L-methionine contacts are provided by residues threonine 12, 36 to 40 (GCGTG), aspartate 59, and alanine 87.

This sequence belongs to the methyltransferase superfamily. Archaeal-type CbiT family.

The catalysed reaction is Co-precorrin-6B + S-adenosyl-L-methionine = Co-precorrin-7 + S-adenosyl-L-homocysteine + CO2. It functions in the pathway cofactor biosynthesis; adenosylcobalamin biosynthesis; cob(II)yrinate a,c-diamide from sirohydrochlorin (anaerobic route): step 8/10. In terms of biological role, catalyzes the methylation of C-15 in cobalt-precorrin-6B followed by the decarboxylation of C-12 to form cobalt-precorrin-7. In Methanosarcina mazei (strain ATCC BAA-159 / DSM 3647 / Goe1 / Go1 / JCM 11833 / OCM 88) (Methanosarcina frisia), this protein is Probable cobalt-precorrin-6B C(15)-methyltransferase (decarboxylating).